The following is a 371-amino-acid chain: UPF0284 protein tll2306 (371 aa).

The protein belongs to the UPF0284 family.

This Thermosynechococcus vestitus (strain NIES-2133 / IAM M-273 / BP-1) protein is UPF0284 protein tll2306.